Here is a 357-residue protein sequence, read N- to C-terminus: Sulfate/thiosulfate import ATP-binding protein CysA (357 aa).

Positions 3–237 constitute an ABC transporter domain; that stretch reads IQIQGVSKQY…PASPFVYDFL (235 aa). Position 35 to 42 (35 to 42) interacts with ATP; that stretch reads GPSGSGKT.

This sequence belongs to the ABC transporter superfamily. Sulfate/tungstate importer (TC 3.A.1.6) family. The complex is composed of two ATP-binding proteins (CysA), two transmembrane proteins (CysT and CysW) and a solute-binding protein (CysP).

It localises to the cell membrane. It catalyses the reaction sulfate(out) + ATP + H2O = sulfate(in) + ADP + phosphate + H(+). It carries out the reaction thiosulfate(out) + ATP + H2O = thiosulfate(in) + ADP + phosphate + H(+). Its function is as follows. Part of the ABC transporter complex CysAWTP involved in sulfate/thiosulfate import. Responsible for energy coupling to the transport system. In Bacillus cereus (strain ATCC 10987 / NRS 248), this protein is Sulfate/thiosulfate import ATP-binding protein CysA.